The primary structure comprises 406 residues: Argininosuccinate synthase (406 aa).

8 to 16 contributes to the ATP binding site; sequence AYSGGLDTS. L-citrulline is bound at residue Y86. Position 116 (G116) interacts with ATP. L-aspartate contacts are provided by T118, N122, and D123. N122 is a binding site for L-citrulline. L-citrulline-binding residues include R126, S174, S183, E259, and Y271.

Belongs to the argininosuccinate synthase family. Type 1 subfamily. As to quaternary structure, homotetramer.

It is found in the cytoplasm. It catalyses the reaction L-citrulline + L-aspartate + ATP = 2-(N(omega)-L-arginino)succinate + AMP + diphosphate + H(+). The protein operates within amino-acid biosynthesis; L-arginine biosynthesis; L-arginine from L-ornithine and carbamoyl phosphate: step 2/3. This chain is Argininosuccinate synthase, found in Dehalococcoides mccartyi (strain ATCC BAA-2100 / JCM 16839 / KCTC 5957 / BAV1).